We begin with the raw amino-acid sequence, 397 residues long: Elongation factor Tu (397 aa).

The tr-type G domain occupies 10–206 (KPHVNVGTIG…TMDTYFPQPE (197 aa)). The interval 19-26 (GHVDHGKT) is G1. Residue 19-26 (GHVDHGKT) participates in GTP binding. Residue threonine 26 coordinates Mg(2+). The tract at residues 60–64 (GITIA) is G2. The interval 81-84 (DCPG) is G3. GTP contacts are provided by residues 81–85 (DCPGH) and 136–139 (NKAD). The G4 stretch occupies residues 136–139 (NKAD). The G5 stretch occupies residues 174–176 (SAL).

Belongs to the TRAFAC class translation factor GTPase superfamily. Classic translation factor GTPase family. EF-Tu/EF-1A subfamily. In terms of assembly, monomer.

It localises to the cytoplasm. It carries out the reaction GTP + H2O = GDP + phosphate + H(+). GTP hydrolase that promotes the GTP-dependent binding of aminoacyl-tRNA to the A-site of ribosomes during protein biosynthesis. The sequence is that of Elongation factor Tu from Coxiella burnetii (strain Dugway 5J108-111).